Reading from the N-terminus, the 196-residue chain is Holliday junction branch migration complex subunit RuvA (196 aa).

Positions 1-63 (MIASVRGEVI…EDSMTLYGFA (63 aa)) are domain I. Residues 64 to 142 (DADARDLFGT…PVTTGAGVTA (79 aa)) form a domain II region. A flexible linker region spans residues 143 to 151 (VGGHAVRGP). The domain III stretch occupies residues 151-196 (PVVEALVGLGFAAKQAEEACDKVLAADPDATTSSALRAALSMLGKK).

The protein belongs to the RuvA family. Homotetramer. Forms an RuvA(8)-RuvB(12)-Holliday junction (HJ) complex. HJ DNA is sandwiched between 2 RuvA tetramers; dsDNA enters through RuvA and exits via RuvB. An RuvB hexamer assembles on each DNA strand where it exits the tetramer. Each RuvB hexamer is contacted by two RuvA subunits (via domain III) on 2 adjacent RuvB subunits; this complex drives branch migration. In the full resolvosome a probable DNA-RuvA(4)-RuvB(12)-RuvC(2) complex forms which resolves the HJ.

The protein resides in the cytoplasm. The RuvA-RuvB-RuvC complex processes Holliday junction (HJ) DNA during genetic recombination and DNA repair, while the RuvA-RuvB complex plays an important role in the rescue of blocked DNA replication forks via replication fork reversal (RFR). RuvA specifically binds to HJ cruciform DNA, conferring on it an open structure. The RuvB hexamer acts as an ATP-dependent pump, pulling dsDNA into and through the RuvAB complex. HJ branch migration allows RuvC to scan DNA until it finds its consensus sequence, where it cleaves and resolves the cruciform DNA. The chain is Holliday junction branch migration complex subunit RuvA from Mycobacterium sp. (strain JLS).